A 263-amino-acid polypeptide reads, in one-letter code: Small ribosomal subunit protein uS2 (263 aa).

Basic and acidic residues predominate over residues 230–249 (GEALVNEEKEITDEEKKEVL). Residues 230–263 (GEALVNEEKEITDEEKKEVLDEAMSEEDFGEEQE) are disordered. Residues 250–263 (DEAMSEEDFGEEQE) are compositionally biased toward acidic residues.

This sequence belongs to the universal ribosomal protein uS2 family.

This chain is Small ribosomal subunit protein uS2, found in Campylobacter jejuni subsp. jejuni serotype O:2 (strain ATCC 700819 / NCTC 11168).